A 355-amino-acid polypeptide reads, in one-letter code: Protein RecA (355 aa).

66–73 (GPESSGKT) lines the ATP pocket. The interval 331–355 (DVPEEDLPTTEDEQINILPDDSTEE) is disordered. Positions 332–344 (VPEEDLPTTEDEQ) are enriched in acidic residues.

Belongs to the RecA family.

It localises to the cytoplasm. Can catalyze the hydrolysis of ATP in the presence of single-stranded DNA, the ATP-dependent uptake of single-stranded DNA by duplex DNA, and the ATP-dependent hybridization of homologous single-stranded DNAs. It interacts with LexA causing its activation and leading to its autocatalytic cleavage. This chain is Protein RecA, found in Latilactobacillus sakei subsp. sakei (strain 23K) (Lactobacillus sakei subsp. sakei).